The primary structure comprises 372 residues: NAD(P)H-quinone oxidoreductase subunit 1 (372 aa).

Helical transmembrane passes span 27–47 (AIWM…GVLV), 97–117 (WLFL…YLIV), 130–150 (VGIF…LMAG), 176–196 (LALS…IDIV), 204–224 (ILGW…IAAL), 254–274 (FALF…VFAV), 308–328 (SLGI…AILL), and 351–371 (VSLV…FAFG).

This sequence belongs to the complex I subunit 1 family. In terms of assembly, NDH-1 is composed of at least 11 different subunits.

The protein resides in the cellular thylakoid membrane. The catalysed reaction is a plastoquinone + NADH + (n+1) H(+)(in) = a plastoquinol + NAD(+) + n H(+)(out). It catalyses the reaction a plastoquinone + NADPH + (n+1) H(+)(in) = a plastoquinol + NADP(+) + n H(+)(out). In terms of biological role, NDH-1 shuttles electrons from an unknown electron donor, via FMN and iron-sulfur (Fe-S) centers, to quinones in the respiratory and/or the photosynthetic chain. The immediate electron acceptor for the enzyme in this species is believed to be plastoquinone. Couples the redox reaction to proton translocation, and thus conserves the redox energy in a proton gradient. This Microcystis aeruginosa (strain NIES-843 / IAM M-2473) protein is NAD(P)H-quinone oxidoreductase subunit 1.